A 283-amino-acid chain; its full sequence is uncharacterized protein (283 aa).

3 helical membrane-spanning segments follow: residues 18 to 38 (VYDI…AKLI), 61 to 81 (VIYF…LGLD), and 94 to 114 (IVLG…IFLI).

It belongs to the MscS (TC 1.A.23) family.

It localises to the cell membrane. This is an uncharacterized protein from Archaeoglobus fulgidus (strain ATCC 49558 / DSM 4304 / JCM 9628 / NBRC 100126 / VC-16).